Reading from the N-terminus, the 130-residue chain is Large ribosomal subunit protein bL12 (130 aa).

Belongs to the bacterial ribosomal protein bL12 family. In terms of assembly, homodimer. Part of the ribosomal stalk of the 50S ribosomal subunit. Forms a multimeric L10(L12)X complex, where L10 forms an elongated spine to which 2 to 4 L12 dimers bind in a sequential fashion. Binds GTP-bound translation factors.

In terms of biological role, forms part of the ribosomal stalk which helps the ribosome interact with GTP-bound translation factors. Is thus essential for accurate translation. The polypeptide is Large ribosomal subunit protein bL12 (Cutibacterium acnes (strain DSM 16379 / KPA171202) (Propionibacterium acnes)).